The following is a 1246-amino-acid chain: Probable membrane antigen 3 (1246 aa).

The protein localises to the virion tegument. The chain is Probable membrane antigen 3 (3) from Saimiri sciureus (Common squirrel monkey).